A 649-amino-acid polypeptide reads, in one-letter code: Acetyl-coenzyme A synthetase (649 aa).

CoA is bound by residues 190–193 (RGGR) and threonine 310. Residues 386–388 (GEP), 410–415 (DTWWQT), aspartate 499, and arginine 514 contribute to the ATP site. Residue serine 522 coordinates CoA. Arginine 525 lines the ATP pocket. Residues valine 536, histidine 538, and valine 541 each coordinate Mg(2+). Position 583 (arginine 583) interacts with CoA. Lysine 608 bears the N6-acetyllysine mark.

The protein belongs to the ATP-dependent AMP-binding enzyme family. Mg(2+) is required as a cofactor. Acetylated. Deacetylation by the SIR2-homolog deacetylase activates the enzyme.

It carries out the reaction acetate + ATP + CoA = acetyl-CoA + AMP + diphosphate. Catalyzes the conversion of acetate into acetyl-CoA (AcCoA), an essential intermediate at the junction of anabolic and catabolic pathways. AcsA undergoes a two-step reaction. In the first half reaction, AcsA combines acetate with ATP to form acetyl-adenylate (AcAMP) intermediate. In the second half reaction, it can then transfer the acetyl group from AcAMP to the sulfhydryl group of CoA, forming the product AcCoA. The chain is Acetyl-coenzyme A synthetase from Methylorubrum extorquens (strain PA1) (Methylobacterium extorquens).